The chain runs to 373 residues: Mitochondrial fission regulator 2 (373 aa).

Ser136 carries the post-translational modification Phosphoserine. The stretch at 151–179 (VSEAAIKKIAALEDELTSLRAQIAAIVAM) forms a coiled coil. Disordered stretches follow at residues 189–331 (GFIS…WDPV) and 346–373 (DDSF…GSRF). Pro residues predominate over residues 224–239 (SPPPLPPPPPPLPPPQ). 2 stretches are compositionally biased toward basic and acidic residues: residues 275–287 (KKTD…ESQR) and 297–310 (VLKD…RPVE). Residues Ser312 and Ser348 each carry the phosphoserine modification. Polar residues predominate over residues 354-373 (RSWQGSPFSSPETSRNGSRF).

Belongs to the MTFR1 family.

It localises to the mitochondrion. May play a role in mitochondrial aerobic respiration essentially in the testis. Can also promote mitochondrial fission. In Rattus norvegicus (Rat), this protein is Mitochondrial fission regulator 2 (Mtfr2).